Reading from the N-terminus, the 80-residue chain is U-actitoxin-Avd9b (80 aa).

Residues 1-20 (MNLKVLAVFVLCAILVVVTA) form the signal peptide. Residues 21–39 (ERRGTETGGYKKDTLQDLK) constitute a propeptide that is removed on maturation. Residues 45–80 (CFDRYREAACTSDNIRLLCKTSAKYQINCKKSCGLC) form the ShKT domain. Cystine bridges form between C45/C80, C54/C73, and C63/C77. The segment at 68–69 (KY) is crucial for binding to potassium channels.

Belongs to the sea anemone type 1 potassium channel toxin family. Type 1b subfamily.

It localises to the secreted. The protein localises to the nematocyst. In terms of biological role, inhibits voltage-gated potassium channels (Kv1/KCNA). The chain is U-actitoxin-Avd9b from Anemonia viridis (Snakelocks anemone).